The following is a 153-amino-acid chain: Aspartate carbamoyltransferase regulatory chain (153 aa).

Cysteine 109, cysteine 114, cysteine 135, and cysteine 138 together coordinate Zn(2+).

It belongs to the PyrI family. Contains catalytic and regulatory chains. The cofactor is Zn(2+).

In terms of biological role, involved in allosteric regulation of aspartate carbamoyltransferase. The protein is Aspartate carbamoyltransferase regulatory chain of Natronomonas pharaonis (strain ATCC 35678 / DSM 2160 / CIP 103997 / JCM 8858 / NBRC 14720 / NCIMB 2260 / Gabara) (Halobacterium pharaonis).